A 473-amino-acid polypeptide reads, in one-letter code: Photosystem II CP43 reaction center protein (473 aa).

The propeptide occupies 1–14 (MKTLYSLRRFYPVE). Thr15 carries the post-translational modification N-acetylthreonine. Thr15 is modified (phosphothreonine). Transmembrane regions (helical) follow at residues 69–93 (LFEV…PHLA), 134–155 (LLGP…KDRN), 178–200 (KALY…RKIT), 255–275 (KPFA…LSYS), and 291–312 (WFNN…ASQA). A [CaMn4O5] cluster-binding site is contributed by Glu367. A helical transmembrane segment spans residues 447–471 (RARAAAAGFEKGIDRDFEPVLSMTP).

Belongs to the PsbB/PsbC family. PsbC subfamily. As to quaternary structure, PSII is composed of 1 copy each of membrane proteins PsbA, PsbB, PsbC, PsbD, PsbE, PsbF, PsbH, PsbI, PsbJ, PsbK, PsbL, PsbM, PsbT, PsbX, PsbY, PsbZ, Psb30/Ycf12, at least 3 peripheral proteins of the oxygen-evolving complex and a large number of cofactors. It forms dimeric complexes. The cofactor is Binds multiple chlorophylls and provides some of the ligands for the Ca-4Mn-5O cluster of the oxygen-evolving complex. It may also provide a ligand for a Cl- that is required for oxygen evolution. PSII binds additional chlorophylls, carotenoids and specific lipids..

It is found in the plastid. Its subcellular location is the chloroplast thylakoid membrane. Its function is as follows. One of the components of the core complex of photosystem II (PSII). It binds chlorophyll and helps catalyze the primary light-induced photochemical processes of PSII. PSII is a light-driven water:plastoquinone oxidoreductase, using light energy to abstract electrons from H(2)O, generating O(2) and a proton gradient subsequently used for ATP formation. This chain is Photosystem II CP43 reaction center protein, found in Daucus carota (Wild carrot).